The chain runs to 227 residues: UPF0758 protein CPF_2399 (227 aa).

An MPN domain is found at 105-227; the sequence is KISKPSDVAK…FISLKEKDIL (123 aa). Zn(2+)-binding residues include H176, H178, and D189. Positions 176–189 match the JAMM motif motif; it reads HNHPSGDPTPSRDD.

Belongs to the UPF0758 family.

The sequence is that of UPF0758 protein CPF_2399 from Clostridium perfringens (strain ATCC 13124 / DSM 756 / JCM 1290 / NCIMB 6125 / NCTC 8237 / Type A).